A 105-amino-acid chain; its full sequence is Ketoisovalerate oxidoreductase subunit VorD (105 aa).

4Fe-4S ferredoxin-type domains follow at residues 44-73 and 74-103; these read FMPV…IKED and GFVA…MVRE. Residues Cys53, Cys56, Cys59, Cys63, Cys83, Cys86, Cys89, and Cys93 each contribute to the [4Fe-4S] cluster site.

As to quaternary structure, heterotetramer of one alpha, one beta, one delta and one gamma chain. Requires [4Fe-4S] cluster as cofactor.

The catalysed reaction is 3-methyl-2-oxobutanoate + 2 oxidized [2Fe-2S]-[ferredoxin] + CoA = 2-methylpropanoyl-CoA + 2 reduced [2Fe-2S]-[ferredoxin] + CO2 + H(+). This chain is Ketoisovalerate oxidoreductase subunit VorD (vorD), found in Pyrococcus abyssi (strain GE5 / Orsay).